The following is a 343-amino-acid chain: Large ribosomal subunit protein uL3 (343 aa).

2 disordered regions span residues 1–31 (MGHR…TPRS) and 238–262 (KGSR…PGQM).

Belongs to the universal ribosomal protein uL3 family. As to quaternary structure, part of the 50S ribosomal subunit. Forms a cluster with proteins L14 and L24e.

Functionally, one of the primary rRNA binding proteins, it binds directly near the 3'-end of the 23S rRNA, where it nucleates assembly of the 50S subunit. The protein is Large ribosomal subunit protein uL3 of Sulfurisphaera tokodaii (strain DSM 16993 / JCM 10545 / NBRC 100140 / 7) (Sulfolobus tokodaii).